The sequence spans 723 residues: Probable dipeptidyl-peptidase 5 (723 aa).

The signal sequence occupies residues 1–19 (MAALRWLSAVVAVSTTVLA). 6 N-linked (GlcNAc...) asparagine glycosylation sites follow: Asn79, Asn97, Asn154, Asn255, Asn381, and Asn451. Ser561 serves as the catalytic Charge relay system. Asn608 carries an N-linked (GlcNAc...) asparagine glycan. Residues Asp644 and His676 each act as charge relay system in the active site.

The protein belongs to the peptidase S9C family.

Its subcellular location is the secreted. In terms of biological role, extracellular dipeptidyl-peptidase which removes N-terminal dipeptides sequentially from polypeptides having unsubstituted N-termini. The sequence is that of Probable dipeptidyl-peptidase 5 (dpp5) from Aspergillus terreus (strain NIH 2624 / FGSC A1156).